Here is a 132-residue protein sequence, read N- to C-terminus: Small ribosomal subunit protein uS8 (132 aa).

It belongs to the universal ribosomal protein uS8 family. Part of the 30S ribosomal subunit. Contacts proteins S5 and S12.

Functionally, one of the primary rRNA binding proteins, it binds directly to 16S rRNA central domain where it helps coordinate assembly of the platform of the 30S subunit. The sequence is that of Small ribosomal subunit protein uS8 from Francisella tularensis subsp. novicida (strain U112).